The following is a 436-amino-acid chain: Prenyltransferase nscD (436 aa).

It belongs to the tryptophan dimethylallyltransferase family.

Its pathway is secondary metabolite biosynthesis. Functionally, prenyltransferase; part of the gene cluster that mediates the biosynthesis of neosartoricin B, a prenylated anthracenone that probably exhibits T-cell antiproliferative activity, suggestive of a physiological role as an immunosuppressive agent. The non-reducing polyketide synthase nscA probably synthesizes and cyclizes the decaketide backbone. The hydrolase nscB then mediates the product release through hydrolysis followed by spontaneous decarboxylation. The prenyltransferase nscD catalyzes the addition of the dimethylallyl group to the aromatic C5. The FAD-dependent monooxygenase nscC is then responsible for the stereospecific hydroxylation at C2. Neosartoricin B can be converted into two additional compounds neosartoricins C and D. Neosartoricin C is a spirocyclic compound that is cyclized through the attack of C3 hydroxyl on C14, followed by dehydration. On the other hand, neosartoricin D is a further cyclized compound in which attack of C2 on C14 in neosartoricin C results in the formation of the acetal-containing dioxabicyclo-octanone ring. Both of these compounds are novel and possibly represent related metabolites of the gene cluster. This chain is Prenyltransferase nscD, found in Arthroderma otae (strain ATCC MYA-4605 / CBS 113480) (Microsporum canis).